Consider the following 396-residue polypeptide: Cytochrome c biogenesis protein Ccs1 (396 aa).

3 consecutive transmembrane segments (helical) span residues 22 to 42, 79 to 99, and 162 to 182; these read LKFSITLFIIICIVSAIGTII, SNFYLILLLCLSFSLFFCSLK, and AGPLLIHLSLILILLGSAIHA.

The protein belongs to the Ccs1/CcsB family. As to quaternary structure, may interact with CcsA.

The protein resides in the plastid. The protein localises to the chloroplast thylakoid membrane. In terms of biological role, required during biogenesis of c-type cytochromes (cytochrome c6 and cytochrome f) at the step of heme attachment. In Cyanidium caldarium (Red alga), this protein is Cytochrome c biogenesis protein Ccs1.